We begin with the raw amino-acid sequence, 81 residues long: Protein Vpu (81 aa).

The Extracellular portion of the chain corresponds to 1 to 7 (MQPSQII). The chain crosses the membrane as a helical span at residues 8–28 (AIAALVVAAIIAIVVWTIVFI). The Cytoplasmic portion of the chain corresponds to 29–81 (EYRRIKRQRKIDCIIDRIRERAEDSGNESEGDREELSKLVEMGHHAPWDIDDL). Residues S53 and S57 each carry the phosphoserine; by host CK2 modification.

It belongs to the HIV-1 VPU protein family. In terms of assembly, homopentamer. Interacts with host CD4 and BRTC; these interactions induce proteasomal degradation of CD4. Interacts with host BST2; this interaction leads to the degradation of host BST2. Interacts with host FBXW11. Interacts with host AP1M1; this interaction plays a role in the mistrafficking and subsequent degradation of host BST2. Interacts with host RANBP2; this interaction allows Vpu to down-regulate host BLM sumoylation. Phosphorylated by host CK2. This phosphorylation is necessary for interaction with human BTRC and degradation of CD4.

Its subcellular location is the host membrane. With respect to regulation, ion channel activity is inhibited by hexamethylene amiloride in vitro. Its function is as follows. Enhances virion budding by targeting host CD4 and Tetherin/BST2 to proteasome degradation. Degradation of CD4 prevents any unwanted premature interactions between viral Env and its host receptor CD4 in the endoplasmic reticulum. Degradation of antiretroviral protein Tetherin/BST2 is important for virion budding, as BST2 tethers new viral particles to the host cell membrane. Mechanistically, Vpu bridges either CD4 or BST2 to BTRC, a substrate recognition subunit of the Skp1/Cullin/F-box protein E3 ubiquitin ligase, induces their ubiquitination and subsequent proteasomal degradation. The alteration of the E3 ligase specificity by Vpu seems to promote the degradation of host IKBKB, leading to NF-kappa-B down-regulation and subsequent apoptosis. Acts as a viroporin that forms an oligomeric ion channel in membranes. Modulates the host DNA repair mechanisms to promote degradation of nuclear viral cDNA in cells that are already productively infected in order to suppress immune sensing and proviral hyper-integration (superinfection). Manipulates PML-NBs and modulates SUMOylation of host BLM protein thereby enhancing its DNA-end processing activity toward viral unintegrated linear DNA. Also inhibits RAD52-mediated homologous repair of viral cDNA, preventing the generation of dead-end circular forms of single copies of the long terminal repeat and permitting sustained nucleolytic attack. The sequence is that of Protein Vpu from Homo sapiens (Human).